Here is a 690-residue protein sequence, read N- to C-terminus: Elongation factor G (690 aa).

One can recognise a tr-type G domain in the interval 8–282 (EKTRNIGIMA…AVVAYMPSPL (275 aa)). GTP contacts are provided by residues 17–24 (AHIDAGKT), 81–85 (DTPGH), and 135–138 (NKMD).

This sequence belongs to the TRAFAC class translation factor GTPase superfamily. Classic translation factor GTPase family. EF-G/EF-2 subfamily.

The protein resides in the cytoplasm. In terms of biological role, catalyzes the GTP-dependent ribosomal translocation step during translation elongation. During this step, the ribosome changes from the pre-translocational (PRE) to the post-translocational (POST) state as the newly formed A-site-bound peptidyl-tRNA and P-site-bound deacylated tRNA move to the P and E sites, respectively. Catalyzes the coordinated movement of the two tRNA molecules, the mRNA and conformational changes in the ribosome. This chain is Elongation factor G, found in Alkaliphilus oremlandii (strain OhILAs) (Clostridium oremlandii (strain OhILAs)).